A 124-amino-acid polypeptide reads, in one-letter code: UPF0738 protein GWCH70_0774 (124 aa).

It belongs to the UPF0738 family.

The protein is UPF0738 protein GWCH70_0774 of Geobacillus sp. (strain WCH70).